Consider the following 399-residue polypeptide: Phosphoglycerate kinase (399 aa).

Residues Asp21–Asn23, Arg36, His59–Arg62, Arg120, and Arg158 contribute to the substrate site. ATP is bound by residues Lys209, Gly297, Glu328, and Gly355–Ser358.

The protein belongs to the phosphoglycerate kinase family. In terms of assembly, monomer.

The protein localises to the cytoplasm. The catalysed reaction is (2R)-3-phosphoglycerate + ATP = (2R)-3-phospho-glyceroyl phosphate + ADP. Its pathway is carbohydrate degradation; glycolysis; pyruvate from D-glyceraldehyde 3-phosphate: step 2/5. The chain is Phosphoglycerate kinase from Streptococcus thermophilus (strain ATCC BAA-250 / LMG 18311).